The chain runs to 300 residues: GTPase Era (300 aa).

The 169-residue stretch at Arg-8–Glu-176 folds into the Era-type G domain. The interval Gly-16–Ser-23 is G1. Gly-16–Ser-23 serves as a coordination point for GTP. A G2 region spans residues Gln-42–His-46. The tract at residues Asp-63–Gly-66 is G3. GTP is bound by residues Asp-63 to Met-67 and Asn-125 to Asp-128. The segment at Asn-125–Asp-128 is G4. Residues Val-155 to Ala-157 form a G5 region. Positions Val-199–Gly-283 constitute a KH type-2 domain.

It belongs to the TRAFAC class TrmE-Era-EngA-EngB-Septin-like GTPase superfamily. Era GTPase family. In terms of assembly, monomer.

The protein resides in the cytoplasm. It localises to the cell inner membrane. In terms of biological role, an essential GTPase that binds both GDP and GTP, with rapid nucleotide exchange. Plays a role in 16S rRNA processing and 30S ribosomal subunit biogenesis and possibly also in cell cycle regulation and energy metabolism. This is GTPase Era from Pseudomonas fluorescens (strain ATCC BAA-477 / NRRL B-23932 / Pf-5).